The following is a 526-amino-acid chain: Tyrosine-protein kinase transforming protein Src (526 aa).

The interval 1–57 is disordered; that stretch reads MGSSKSKPKDPSQRRRSLEPPDSTHHGGFPASQTPNKTAAPDTHRTPSRSFGTVATE. Residue glycine 2 is the site of N-myristoyl glycine; by host attachment. A compositionally biased stretch (basic and acidic residues) spans 7–25; it reads KPKDPSQRRRSLEPPDSTH. One can recognise an SH3 domain in the interval 81–142; sequence GGVTTFVALY…PSNYVAPSDS (62 aa). In terms of domain architecture, SH2 spans 148–245; that stretch reads WYFGKITRRE…GLCHRLTNVC (98 aa). The 251-residue stretch at 267–517 folds into the Protein kinase domain; the sequence is LRLEVKLGQG…TFEYLQAQLL (251 aa). ATP contacts are provided by residues 273–281 and lysine 295; that span reads LGQGCFGEV. The active-site Proton acceptor is aspartate 386. Tyrosine 416 carries the post-translational modification Phosphotyrosine; by autocatalysis.

The protein belongs to the protein kinase superfamily. Tyr protein kinase family. SRC subfamily. Homodimer. The phosphorylated form is termed pp60v-src.

The catalysed reaction is L-tyrosyl-[protein] + ATP = O-phospho-L-tyrosyl-[protein] + ADP + H(+). Its function is as follows. This phosphoprotein, required for both the initiation and the maintenance of neoplastic transformation, is a protein kinase that catalyzes the phosphorylation of tyrosine residues in vitro. Causes mitotic slippage in addition to cytokinesis failure in the host cell. Phosphorylates and attenuates the activity of host CDK1, possibly causing the mitotic slippage. This chain is Tyrosine-protein kinase transforming protein Src (V-SRC), found in Rous sarcoma virus subgroup A (strain Schmidt-Ruppin) (RSV-SR-A).